Consider the following 387-residue polypeptide: Polyadenylate-binding protein RBP45A (387 aa).

RRM domains are found at residues 60-140 (KSLW…WAQA), 154-233 (HTIF…PAAN), and 260-332 (TTIF…WGRS). The segment covering 329–342 (WGRSPNKQSDQAQW) has biased composition (polar residues). The tract at residues 329–387 (WGRSPNKQSDQAQWNGGGYYGYPPQPQGGYGYAAQPPTQDPNAYYGGYTGYGNYQQQRQ) is disordered.

This sequence belongs to the polyadenylate-binding RBP45 family. Interacts with the poly(A) tail of mRNA in nucleus. In terms of tissue distribution, mostly expressed in seedlings, and, to a lower extent, in leaves, stems, and flowers. Present in immature anther tissues (tapetum cells) and mature pollen grains.

Its subcellular location is the nucleus. Its function is as follows. Heterogeneous nuclear ribonucleoprotein (hnRNP)-protein binding the poly(A) tail of mRNA and probably involved in some steps of pre-mRNA maturation. The chain is Polyadenylate-binding protein RBP45A (RBP45A) from Arabidopsis thaliana (Mouse-ear cress).